A 66-amino-acid polypeptide reads, in one-letter code: Alpha-conotoxin GIB (66 aa).

The signal sequence occupies residues 1–21 (MGMRMMFTVFLLVVLATTVVS). Residues 22–49 (FPSERASDGRDDTAKDEGSDMEKLVEKK) constitute a propeptide that is removed on maturation. Intrachain disulfides connect Cys-51-Cys-56 and Cys-52-Cys-62. Gly-64 is modified (glycine amide).

Belongs to the conotoxin A superfamily. Expressed by the venom duct.

The protein localises to the secreted. Alpha-conotoxins act on postsynaptic membranes, they bind to the nicotinic acetylcholine receptors (nAChR) and thus inhibit them. Both the globular (with C1-C3; C2-C4 disulfide pattern) and ribbon (C1-C4; C2-C3) isomers reversibly inhibit human muscle-type alpha-1-beta-1-delta-epsilon/CHRNA1-CHRNB1-CHRND-CHRNE nAChRs (IC(50)=116 nM and IC(50)=643 nM, respectively). Both isomers also inhibit alpha-7/CHRNA7 and alpha-9-alpha-10/CHRNA9-CHRNA10 (IC(50)=1113 nM by globular isomer) nAChRs. In Conus geographus (Geography cone), this protein is Alpha-conotoxin GIB.